The following is a 344-amino-acid chain: Protein PopA1 (344 aa).

Disordered stretches follow at residues 1 to 28, 58 to 108, 134 to 156, 211 to 242, and 268 to 311; these read MSVG…NSQQ, SAGG…DANN, QPGG…AGGQ, GNGV…EDQG, and GGGN…NLQS. Low complexity-rich tracts occupy residues 8–28 and 65–83; these read SPSN…NSQQ and NTGN…ANDP. Residues 89–108 are compositionally biased toward polar residues; it reads SKSQGPQSANKTGNVDDANN. A compositionally biased stretch (gly residues) spans 138-156; the sequence is NDKGNGVGGANGAKGAGGQ. Residues 215–235 show a composition bias toward low complexity; it reads NGNQANGPQNAGDVNGANGAD. Residues 268 to 279 are compositionally biased toward gly residues; the sequence is GGGNQAQGGSKG. Positions 280 to 294 are enriched in low complexity; it reads AGNASPASGANPGAN. Residues 295–311 are compositionally biased toward polar residues; sequence QPGSADDQSSGQNNLQS.

In terms of processing, popA2 and PopA3 are produced from PopA1.

Its subcellular location is the secreted. In terms of biological role, acts as a specific hypersensitive response (HR) elicitor. Has activity on tobacco (non-host plant) and petunia but is without activity on tomato (host plant); PopA3 seems to be more active than a PopA1-PopA2 mixture. This Ralstonia nicotianae (strain ATCC BAA-1114 / GMI1000) (Ralstonia solanacearum) protein is Protein PopA1 (popA).